Here is a 232-residue protein sequence, read N- to C-terminus: Large ribosomal subunit protein uL1 (232 aa).

It belongs to the universal ribosomal protein uL1 family. As to quaternary structure, part of the 50S ribosomal subunit.

Functionally, binds directly to 23S rRNA. The L1 stalk is quite mobile in the ribosome, and is involved in E site tRNA release. Protein L1 is also a translational repressor protein, it controls the translation of the L11 operon by binding to its mRNA. The polypeptide is Large ribosomal subunit protein uL1 (Alkaliphilus oremlandii (strain OhILAs) (Clostridium oremlandii (strain OhILAs))).